The following is a 171-amino-acid chain: Co-chaperone protein HscB homolog (171 aa).

Residues 2 to 74 enclose the J domain; it reads NYFELFGLPI…LRRAEYLLSL (73 aa).

It belongs to the HscB family. Interacts with HscA and stimulates its ATPase activity.

Its function is as follows. Co-chaperone involved in the maturation of iron-sulfur cluster-containing proteins. Seems to help targeting proteins to be folded toward HscA. The sequence is that of Co-chaperone protein HscB homolog from Vibrio cholerae serotype O1 (strain M66-2).